Here is a 184-residue protein sequence, read N- to C-terminus: UPF0215 protein MJ1150 (184 aa).

It belongs to the UPF0215 family.

The protein is UPF0215 protein MJ1150 of Methanocaldococcus jannaschii (strain ATCC 43067 / DSM 2661 / JAL-1 / JCM 10045 / NBRC 100440) (Methanococcus jannaschii).